The sequence spans 411 residues: Heterogeneous nuclear ribonucleoprotein 1 (411 aa).

The RRM 1 domain maps to 6-82 (GKLFVGGISW…REVDVKRAMS (77 aa)). Disordered stretches follow at residues 81 to 103 (MSREEQQVSGRTGNLNTSRSSGG), 183 to 221 (KRALPKDANPGGGGRSMGGGGSGGYQGYGGNESSYDGRM), and 358 to 411 (AAYG…RQGQ). A compositionally biased stretch (polar residues) spans 87–101 (QVSGRTGNLNTSRSS). The RRM 2 domain occupies 110-187 (KKIFVGGLPP…KQVEVKRALP (78 aa)). 3 stretches are compositionally biased toward gly residues: residues 192–212 (PGGGGRSMGGGGSGGYQGYGG), 362–387 (VVGGRPSGGGSNNPGSGGYMGGGYGD), and 397–411 (GYGGGYNDGQGRQGQ). The interval 341–390 (GYGYGGYSGSDSGYGNQAAYGVVGGRPSGGGSNNPGSGGYMGGGYGDGSW) is nuclear targeting sequence (M9).

Component of the spliceosome. Interacts with TRN1.

The protein localises to the nucleus. The protein resides in the cytoplasm. In terms of biological role, involved with pre-mRNA processing. Forms complexes (ribonucleosomes) with at least 20 other different hnRNP and heterogeneous nuclear RNA in the nucleus. Functionally, involved in the packaging of pre-mRNA into hnRNP particles, transport of poly(A) mRNA from the nucleus to the cytoplasm and may modulate splice site selection. This is Heterogeneous nuclear ribonucleoprotein 1 (RNP1) from Arabidopsis thaliana (Mouse-ear cress).